The chain runs to 222 residues: Large ribosomal subunit protein uL11c (222 aa).

The disordered stretch occupies residues 1–20; the sequence is MASSSLSTLCSSTSSSLHPN. The N-terminal 62 residues, 1–62, are a transit peptide targeting the chloroplast; sequence MASSSLSTLC…TPRFLTVIAM (62 aa).

The protein belongs to the universal ribosomal protein uL11 family. In terms of assembly, part of the ribosomal stalk of the 50S ribosomal subunit. Interacts with L10 and the large rRNA to form the base of the stalk. L10 forms an elongated spine to which L12 dimers bind in a sequential fashion forming a multimeric L10(L12)X complex.

The protein localises to the plastid. It localises to the chloroplast. Functionally, forms part of the ribosomal stalk which helps the ribosome interact with GTP-bound translation factors. The polypeptide is Large ribosomal subunit protein uL11c (RPL11) (Arabidopsis thaliana (Mouse-ear cress)).